The sequence spans 545 residues: Chaperonin GroEL 3 (545 aa).

Residues 29–32 (TLGP), 86–90 (DGTTT), G413, 479–481 (DAV), and D495 each bind ATP. The segment at 526 to 545 (DKQAKAPAGVGPGPGEGFDY) is disordered. Positions 535-545 (VGPGPGEGFDY) are enriched in gly residues.

It belongs to the chaperonin (HSP60) family. In terms of assembly, forms a cylinder of 14 subunits composed of two heptameric rings stacked back-to-back. Interacts with the co-chaperonin GroES.

It is found in the cytoplasm. The catalysed reaction is ATP + H2O + a folded polypeptide = ADP + phosphate + an unfolded polypeptide.. Its function is as follows. Together with its co-chaperonin GroES, plays an essential role in assisting protein folding. The GroEL-GroES system forms a nano-cage that allows encapsulation of the non-native substrate proteins and provides a physical environment optimized to promote and accelerate protein folding. The polypeptide is Chaperonin GroEL 3 (Trichormus variabilis (strain ATCC 29413 / PCC 7937) (Anabaena variabilis)).